Consider the following 211-residue polypeptide: MKPMQRLTCLLALCFAASASAKVTMEIPDTIDLLVVNGSSPKLSGGFFDATKKLELEDGEQQIVFRYSPYFSQGNDRIIIDSEVVIATFDAANQELRFDMPKYRDAPQATKAIKTMQWQLLDQQGKAVELRQDRLIKEGMQIGRNFEFETAEYNKKGGVAALTSSMAVQPIAQQEISNATAMAAAEEMLHFWYNKADAETKARFKAFVNQQ.

The N-terminal stretch at 1–21 (MKPMQRLTCLLALCFAASASA) is a signal peptide.

It belongs to the UPF0319 family.

The chain is UPF0319 protein VC_A0026 from Vibrio cholerae serotype O1 (strain ATCC 39315 / El Tor Inaba N16961).